Reading from the N-terminus, the 1801-residue chain is U3 small nucleolar RNA-associated protein 10 (1801 aa).

The next 2 helical transmembrane spans lie at 102–122 (LALVGGRLLLSPAVKAVEWLI) and 136–156 (ILTFLPYYSTPVFLNLLAILP). An HEAT 1 repeat occupies 581 to 619 (DVDVQALLPFMLIALADPSERVRSGAVDALANIGKVVDK). A run of 2 helical transmembrane segments spans residues 939–959 (IQSGMSYLLSLTLGSLLAIVN) and 995–1015 (ALLLVAGLSVIAPELVLHSVM). HEAT repeat units lie at residues 1038-1076 (DQTIDQVVPALIQSLRHQKRDVVSGTSELLLSFTAAFEH), 1110-1148 (YSMDKAVLVLMTGLVSDADATVELSTYSKFLNLVGDSLK), 1244-1282 (TLTTIDFLDTIEALLKRPDDALRRKVLSLLATRLQQSPE), 1288-1327 (QTRMLDFLTVLVDIVQSSPDILLKHAAVTCIDRITEKYGK), and 1756-1794 (LALLPEMLPYISELMEDEDEGVEREVRKWVKQIEGVLGE).

Belongs to the HEATR1/UTP10 family. As to quaternary structure, component of the ribosomal small subunit (SSU) processome.

The protein resides in the nucleus. The protein localises to the nucleolus. It localises to the membrane. In terms of biological role, involved in nucleolar processing of pre-18S ribosomal RNA. Involved in ribosome biosynthesis. The sequence is that of U3 small nucleolar RNA-associated protein 10 from Emericella nidulans (strain FGSC A4 / ATCC 38163 / CBS 112.46 / NRRL 194 / M139) (Aspergillus nidulans).